Consider the following 362-residue polypeptide: Glutamate 5-kinase (362 aa).

Lysine 3 provides a ligand contact to ATP. The substrate site is built by serine 43, aspartate 128, and asparagine 140. Residues 160–161 and 202–208 each bind ATP; these read TD and TGGMRTK. In terms of domain architecture, PUA spans 267 to 348; the sequence is AGAILVDAGA…RDIENVLGYS (82 aa).

This sequence belongs to the glutamate 5-kinase family.

The protein resides in the cytoplasm. It carries out the reaction L-glutamate + ATP = L-glutamyl 5-phosphate + ADP. It participates in amino-acid biosynthesis; L-proline biosynthesis; L-glutamate 5-semialdehyde from L-glutamate: step 1/2. Its function is as follows. Catalyzes the transfer of a phosphate group to glutamate to form L-glutamate 5-phosphate. This chain is Glutamate 5-kinase, found in Xanthomonas oryzae pv. oryzae (strain MAFF 311018).